A 452-amino-acid chain; its full sequence is Probable 1,4-beta-D-glucan cellobiohydrolase A (452 aa).

The signal sequence occupies residues 1 to 17 (MHQRALLFSALAVAANA). Asparagine 81 is a glycosylation site (N-linked (GlcNAc...) asparagine). Glutamate 226 acts as the Nucleophile in catalysis. Glutamate 231 functions as the Proton donor in the catalytic mechanism. A glycan (N-linked (GlcNAc...) asparagine) is linked at asparagine 284. The interval 406–432 (DPSKPGVARGTCEHGAGDPEKVESQHP) is disordered. Over residues 416–431 (TCEHGAGDPEKVESQH) the composition is skewed to basic and acidic residues.

This sequence belongs to the glycosyl hydrolase 7 (cellulase C) family.

It is found in the secreted. It carries out the reaction Hydrolysis of (1-&gt;4)-beta-D-glucosidic linkages in cellulose and cellotetraose, releasing cellobiose from the non-reducing ends of the chains.. Functionally, the biological conversion of cellulose to glucose generally requires three types of hydrolytic enzymes: (1) Endoglucanases which cut internal beta-1,4-glucosidic bonds; (2) Exocellobiohydrolases that cut the disaccharide cellobiose from the non-reducing end of the cellulose polymer chain; (3) Beta-1,4-glucosidases which hydrolyze the cellobiose and other short cello-oligosaccharides to glucose. This chain is Probable 1,4-beta-D-glucan cellobiohydrolase A (cbhA), found in Neosartorya fischeri (strain ATCC 1020 / DSM 3700 / CBS 544.65 / FGSC A1164 / JCM 1740 / NRRL 181 / WB 181) (Aspergillus fischerianus).